The primary structure comprises 475 residues: Arginine biosynthesis bifunctional protein ArgJ 1, mitochondrial (475 aa).

6 residues coordinate substrate: T204, K233, T244, E331, N470, and T475. The Nucleophile role is filled by T244.

This sequence belongs to the ArgJ family. In terms of assembly, heterodimer of an alpha and a beta chain. Post-translationally, the alpha and beta chains are autoproteolytically processed from a single precursor protein within the mitochondrion.

The protein localises to the mitochondrion matrix. The enzyme catalyses N(2)-acetyl-L-ornithine + L-glutamate = N-acetyl-L-glutamate + L-ornithine. It catalyses the reaction L-glutamate + acetyl-CoA = N-acetyl-L-glutamate + CoA + H(+). It participates in amino-acid biosynthesis; L-arginine biosynthesis; L-ornithine and N-acetyl-L-glutamate from L-glutamate and N(2)-acetyl-L-ornithine (cyclic): step 1/1. It functions in the pathway amino-acid biosynthesis; L-arginine biosynthesis; N(2)-acetyl-L-ornithine from L-glutamate: step 1/4. In terms of biological role, catalyzes two activities which are involved in the cyclic version of arginine biosynthesis: the synthesis of acetylglutamate from glutamate and acetyl-CoA, and of ornithine by transacetylation between acetylornithine and glutamate. This is Arginine biosynthesis bifunctional protein ArgJ 1, mitochondrial from Botryotinia fuckeliana (strain B05.10) (Noble rot fungus).